Reading from the N-terminus, the 649-residue chain is Acetyl-coenzyme A synthetase (649 aa).

Residues 189–192, Thr-311, and Asn-335 each bind CoA; that span reads RGGK. ATP is bound by residues 387–389, 411–416, Asp-500, and Arg-515; these read GEP and DTWWQT. Position 523 (Ser-523) interacts with CoA. Arg-526 contacts ATP. The Mg(2+) site is built by Val-537, His-539, and Val-542. Arg-584 is a binding site for CoA. At Lys-609 the chain carries N6-acetyllysine.

The protein belongs to the ATP-dependent AMP-binding enzyme family. Requires Mg(2+) as cofactor. Post-translationally, acetylated. Deacetylation by the SIR2-homolog deacetylase activates the enzyme.

The enzyme catalyses acetate + ATP + CoA = acetyl-CoA + AMP + diphosphate. Its function is as follows. Catalyzes the conversion of acetate into acetyl-CoA (AcCoA), an essential intermediate at the junction of anabolic and catabolic pathways. AcsA undergoes a two-step reaction. In the first half reaction, AcsA combines acetate with ATP to form acetyl-adenylate (AcAMP) intermediate. In the second half reaction, it can then transfer the acetyl group from AcAMP to the sulfhydryl group of CoA, forming the product AcCoA. In Sinorhizobium medicae (strain WSM419) (Ensifer medicae), this protein is Acetyl-coenzyme A synthetase.